Reading from the N-terminus, the 163-residue chain is NADH-quinone oxidoreductase subunit I (163 aa).

4Fe-4S ferredoxin-type domains lie at 54–84 (LRRY…IESE) and 94–123 (IVYD…ETQI). Positions 64, 67, 70, 74, 103, 106, 109, and 113 each coordinate [4Fe-4S] cluster.

The protein belongs to the complex I 23 kDa subunit family. NDH-1 is composed of 14 different subunits. Subunits NuoA, H, J, K, L, M, N constitute the membrane sector of the complex. It depends on [4Fe-4S] cluster as a cofactor.

The protein localises to the cell inner membrane. It carries out the reaction a quinone + NADH + 5 H(+)(in) = a quinol + NAD(+) + 4 H(+)(out). Functionally, NDH-1 shuttles electrons from NADH, via FMN and iron-sulfur (Fe-S) centers, to quinones in the respiratory chain. The immediate electron acceptor for the enzyme in this species is believed to be ubiquinone. Couples the redox reaction to proton translocation (for every two electrons transferred, four hydrogen ions are translocated across the cytoplasmic membrane), and thus conserves the redox energy in a proton gradient. This is NADH-quinone oxidoreductase subunit I from Ruthia magnifica subsp. Calyptogena magnifica.